The following is a 664-amino-acid chain: tRNA uridine 5-carboxymethylaminomethyl modification enzyme MnmG (664 aa).

FAD-binding positions include glycine 14 to glycine 19, valine 126, and serine 183. Residue glycine 277–phenylalanine 291 participates in NAD(+) binding. Glutamine 374 serves as a coordination point for FAD.

The protein belongs to the MnmG family. In terms of assembly, homodimer. Heterotetramer of two MnmE and two MnmG subunits. It depends on FAD as a cofactor.

It is found in the cytoplasm. Functionally, NAD-binding protein involved in the addition of a carboxymethylaminomethyl (cmnm) group at the wobble position (U34) of certain tRNAs, forming tRNA-cmnm(5)s(2)U34. The protein is tRNA uridine 5-carboxymethylaminomethyl modification enzyme MnmG of Salinibacter ruber (strain DSM 13855 / M31).